Here is a 237-residue protein sequence, read N- to C-terminus: Phosphatidylserine decarboxylase proenzyme (237 aa).

Ser-206 (schiff-base intermediate with substrate; via pyruvic acid) is an active-site residue. Ser-206 is subject to Pyruvic acid (Ser); by autocatalysis.

The protein belongs to the phosphatidylserine decarboxylase family. PSD-A subfamily. Heterodimer of a large membrane-associated beta subunit and a small pyruvoyl-containing alpha subunit. Requires pyruvate as cofactor. Is synthesized initially as an inactive proenzyme. Formation of the active enzyme involves a self-maturation process in which the active site pyruvoyl group is generated from an internal serine residue via an autocatalytic post-translational modification. Two non-identical subunits are generated from the proenzyme in this reaction, and the pyruvate is formed at the N-terminus of the alpha chain, which is derived from the carboxyl end of the proenzyme. The post-translation cleavage follows an unusual pathway, termed non-hydrolytic serinolysis, in which the side chain hydroxyl group of the serine supplies its oxygen atom to form the C-terminus of the beta chain, while the remainder of the serine residue undergoes an oxidative deamination to produce ammonia and the pyruvoyl prosthetic group on the alpha chain.

It localises to the cell membrane. It catalyses the reaction a 1,2-diacyl-sn-glycero-3-phospho-L-serine + H(+) = a 1,2-diacyl-sn-glycero-3-phosphoethanolamine + CO2. The protein operates within phospholipid metabolism; phosphatidylethanolamine biosynthesis; phosphatidylethanolamine from CDP-diacylglycerol: step 2/2. Its function is as follows. Catalyzes the formation of phosphatidylethanolamine (PtdEtn) from phosphatidylserine (PtdSer). The polypeptide is Phosphatidylserine decarboxylase proenzyme (Rhodococcus opacus (strain B4)).